The primary structure comprises 738 residues: Multifunctional procollagen lysine hydroxylase and glycosyltransferase LH3 (738 aa).

The signal sequence occupies residues 1-24 (MTSSGPGPRFLLLLPLLLPPAASA). The tract at residues 25-290 (SDRPRGRDPV…FCNQDRRTLP (266 aa)) is required for glycosyltransferase activity. A UDP-binding site is contributed by 44-46 (VAT). Residue asparagine 63 is glycosylated (N-linked (GlcNAc...) asparagine). Residues aspartate 112, aspartate 115, and histidine 253 each contribute to the Mn(2+) site. 112-114 (DSY) lines the UDP pocket. 256–259 (GPTK) contributes to the UDP binding site. 2 cysteine pairs are disulfide-bonded: cysteine 279-cysteine 282 and cysteine 379-cysteine 385. The interval 295 to 520 (PPRVFLAVFV…EFGRLLATSR (226 aa)) is accessory region. A glycan (N-linked (GlcNAc...) asparagine) is linked at asparagine 548. Cysteine 563 and cysteine 698 form a disulfide bridge. 2 residues coordinate 2-oxoglutarate: arginine 599 and tyrosine 656. The region spanning 647 to 738 (RAVMNFVVRY…RYIMVSFVDP (92 aa)) is the Fe2OG dioxygenase domain. 2 residues coordinate Fe cation: histidine 667 and aspartate 669. Residues 672–715 (TFTLNVALNHKGLDYEGGGCRFLRYDCVISSPRKGWALLHPGRL) are important for dimerization. Asparagine 676 is a 2-oxoglutarate binding site. Residue histidine 719 coordinates Fe cation. Arginine 729 serves as a coordination point for 2-oxoglutarate.

Homodimer. It depends on Fe(2+) as a cofactor. L-ascorbate is required as a cofactor. Mn(2+) serves as cofactor.

The protein localises to the rough endoplasmic reticulum. It is found in the endoplasmic reticulum lumen. Its subcellular location is the endoplasmic reticulum membrane. The protein resides in the secreted. It localises to the extracellular space. It catalyses the reaction L-lysyl-[collagen] + 2-oxoglutarate + O2 = (5R)-5-hydroxy-L-lysyl-[collagen] + succinate + CO2. It carries out the reaction (5R)-5-hydroxy-L-lysyl-[collagen] + UDP-alpha-D-galactose = (5R)-5-O-(beta-D-galactosyl)-5-hydroxy-L-lysyl-[collagen] + UDP + H(+). The catalysed reaction is (5R)-5-O-(beta-D-galactosyl)-5-hydroxy-L-lysyl-[collagen] + UDP-alpha-D-glucose = (5R)-5-O-[alpha-D-glucosyl-(1-&gt;2)-beta-D-galactosyl]-5-hydroxy-L-lysyl-[collagen] + UDP + H(+). In terms of biological role, multifunctional enzyme that catalyzes a series of post-translational modifications on Lys residues in procollagen. Plays a redundant role in catalyzing the formation of hydroxylysine residues in -Xaa-Lys-Gly- sequences in collagens. Plays a redundant role in catalyzing the transfer of galactose onto hydroxylysine groups, giving rise to galactosyl 5-hydroxylysine. Has an essential role by catalyzing the subsequent transfer of glucose moieties, giving rise to 1,2-glucosylgalactosyl-5-hydroxylysine residues. Catalyzes hydroxylation and glycosylation of Lys residues in the MBL1 collagen-like domain, giving rise to hydroxylysine and 1,2-glucosylgalactosyl-5-hydroxylysine residues. Catalyzes hydroxylation and glycosylation of Lys residues in the ADIPOQ collagen-like domain, giving rise to hydroxylysine and 1,2-glucosylgalactosyl-5-hydroxylysine residues. Essential for normal biosynthesis and secretion of type IV collagens. Essential for normal formation of basement membranes. The protein is Multifunctional procollagen lysine hydroxylase and glycosyltransferase LH3 (PLOD3) of Pongo abelii (Sumatran orangutan).